A 432-amino-acid polypeptide reads, in one-letter code: MTLAAMTAAASQLDNAAPDDVEITDSSAAAEYIADGCLVDGPLGRVGLEMEAHCFDPADPFRRPSWEEITEVLEWLSPLPGGSVVSVEPGGAVELSGPPADGVLAAIGAMTRDQAVLRSALANAGLGLVFLGADPLRSPVRVNPGARYRAMEQFFAASHSGVPGAAMMTSTAAIQVNLDAGPQEGWAERVRLAHALGPTMIAIAANSPMLGGRFSGWQSTRQRVWGQMDSARCGPILGASGDHPGIDWAKYALKAPVMMVRSPDTQDTRAVTDYVPFTDWVDGRVLLDGRRATVADLVYHLTTLFPPVRPRQWLEIRYLDSVPDEVWPAVVFTLVTLLDDPVAADLAVDAVEPVATAWDTAARIGLADRRLYLAANRCLAIAARRVPTELIGAMQRLVDHVDRGVCPADDFSDRVIAGGIASAVTGMMHGAS.

The protein belongs to the glutamate--cysteine ligase type 2 family. EgtA subfamily.

It carries out the reaction L-cysteine + L-glutamate + ATP = gamma-L-glutamyl-L-cysteine + ADP + phosphate + H(+). It participates in amino-acid biosynthesis; ergothioneine biosynthesis. Its function is as follows. Catalyzes the synthesis of gamma-glutamylcysteine (gamma-GC) which is used as substrate for the biosynthesis of the low-molecular thiol compound ergothioneine (ERG). ERG is one of the major redox buffers which protects bacteria against redox stressors and antibiotics; loss of ERG or mycothiol (MSH, the other major redox buffer in this bacteria) leads to respiratory alterations and bioenergetic deficiencies that negatively impact virulence. This is Glutamate--cysteine ligase EgtA (egtA) from Mycobacterium tuberculosis (strain CDC 1551 / Oshkosh).